Consider the following 345-residue polypeptide: Uroporphyrinogen decarboxylase (345 aa).

Substrate contacts are provided by residues 27-31 (RQAGR), phenylalanine 46, aspartate 76, tyrosine 152, serine 207, and histidine 320.

This sequence belongs to the uroporphyrinogen decarboxylase family. As to quaternary structure, homodimer.

Its subcellular location is the cytoplasm. The enzyme catalyses uroporphyrinogen III + 4 H(+) = coproporphyrinogen III + 4 CO2. The protein operates within porphyrin-containing compound metabolism; protoporphyrin-IX biosynthesis; coproporphyrinogen-III from 5-aminolevulinate: step 4/4. Functionally, catalyzes the decarboxylation of four acetate groups of uroporphyrinogen-III to yield coproporphyrinogen-III. The protein is Uroporphyrinogen decarboxylase of Geobacillus sp. (strain WCH70).